We begin with the raw amino-acid sequence, 146 residues long: Hemoglobin subunit beta (146 aa).

At Val1 the chain carries N-acetylvaline. The 145-residue stretch at 2-146 folds into the Globin domain; it reads HLTPEEKTAV…VANALAHKYH (145 aa). Thr12 carries the phosphothreonine modification. Position 44 is a phosphoserine (Ser44). An N6-acetyllysine modification is found at Lys59. His63 contacts heme b. At Lys82 the chain carries N6-acetyllysine. His92 contacts heme b. Cys93 is subject to S-nitrosocysteine. The residue at position 144 (Lys144) is an N6-acetyllysine.

Belongs to the globin family. Heterotetramer of two alpha chains and two beta chains. Red blood cells.

In terms of biological role, involved in oxygen transport from the lung to the various peripheral tissues. In Chlorocebus aethiops (Green monkey), this protein is Hemoglobin subunit beta (HBB).